The chain runs to 353 residues: MMKKALLIDDECWLRVQARDASADGRFVFAVRTTGVFCRPSCRSKRALRKNVRFFANAQQALDAGFRPCKRCQPDNARAQQRRLDKIACACRLLEQETPVTLAFLAQAVAMSPFHLHRLFKASTGMTPKGWQQAWRARRLREALAKGEPITAAIYRAGFPDSSSYYRHADQTLGMTAKQFRKGGDNVSVRYALTDWVYGRCLVAESERGICAILPGDSDDALLAELHTLFPSARHEPADALFQQRVRQVVAAINTRDVLLSLPLDIQGTAFQQQVWQALCAIPCGETVSYQQLAATIGKPTAVRAVASACGANKLAMVIPCHRVVRRDGALSGYRWGVRRKAQLLKREAQKEE.

A DNA-binding site is contributed by T34. The active-site Nucleophile; methyl group acceptor from phosphotriester is the C38. Residues C38 and C42 each contribute to the Zn(2+) site. DNA is bound by residues R43 and R67. 2 residues coordinate Zn(2+): C69 and C72. The HTH araC/xylS-type domain maps to 94-183 (LEQETPVTLA…GMTAKQFRKG (90 aa)). DNA-binding regions (H-T-H motif) lie at residues 103-124 (AFLAQAVAMSPFHLHRLFKAST) and 150-173 (ITAAIYRAGFPDSSSYYRHADQTL). The active-site Nucleophile; methyl group acceptor is the C321.

In the C-terminal section; belongs to the MGMT family. The cofactor is Zn(2+).

The catalysed reaction is a 6-O-methyl-2'-deoxyguanosine in DNA + L-cysteinyl-[protein] = S-methyl-L-cysteinyl-[protein] + a 2'-deoxyguanosine in DNA. It catalyses the reaction a 4-O-methyl-thymidine in DNA + L-cysteinyl-[protein] = a thymidine in DNA + S-methyl-L-cysteinyl-[protein]. In terms of biological role, involved in the cellular defense against the biological effects of O6-methylguanine (O6-MeG) and O4-methylthymine (O4-MeT) in DNA. Repairs the methylated nucleobase in DNA by stoichiometrically transferring the methyl group to a cysteine residue in the enzyme. This is a suicide reaction: the enzyme is irreversibly inactivated. Functionally, the methylated ADA protein acts as a positive regulator of its own synthesis, as well as that of other proteins. The transcription-activating function of the ADA protein resides in its N-terminus. It activates the transcription of alkA, alkB and aidB. The polypeptide is Regulatory protein ada (ada) (Salmonella typhimurium (strain LT2 / SGSC1412 / ATCC 700720)).